The following is a 134-amino-acid chain: Arsenate reductase (134 aa).

Active-site nucleophile residues include cysteine 11, cysteine 83, and cysteine 90. 2 disulfides stabilise this stretch: cysteine 11–cysteine 83 and cysteine 83–cysteine 90.

Belongs to the low molecular weight phosphotyrosine protein phosphatase family. Thioredoxin-coupled ArsC subfamily.

It localises to the cytoplasm. It carries out the reaction arsenate + [thioredoxin]-dithiol + H(+) = arsenite + [thioredoxin]-disulfide + H2O. Its function is as follows. Catalyzes the reduction of arsenate [As(V)] to arsenite [As(III)]. This chain is Arsenate reductase, found in Bacillus cereus (strain G9842).